Here is a 402-residue protein sequence, read N- to C-terminus: Iripin-8 (402 aa).

The N-terminal stretch at 1–16 (MTRLLWLFAAITASLA) is a signal peptide. Residues Asn164 and Asn230 are each glycosylated (N-linked (GlcNAc...) asparagine).

Belongs to the serpin family. Interacts with host thrombin/F2. Interacts with host coagulation factor VII/F7 (activated). Interacts with host coagulation factor X/F10 (activated). Interacts with host coagulation factor XII/F12 (activated). Interacts with host coagulation factor IX/F9 (activated). Interacts with host plasmin/PLG. Interacts with host protein C/PROC (activated). As to expression, saliva (at protein level). Salivary gland. Midgut. Low-level expression in ovary.

It localises to the secreted. Functionally, serine protease inhibitor that modulates blood feeding of ticks on vertebrate species. Inhibits the intrinsic and common pathways of blood coagulation in the host. Inhibits host thrombin, factor VIIa, factor Xa, factor XIa, factor XIIa, plasmin and activated protein C. Inhibits host trypsin and kallikrein. Reduces host complement activity. Does not affect proliferation of CD4+ T-cells and neutrophil migration. The chain is Iripin-8 from Ixodes ricinus (Common tick).